The following is a 199-amino-acid chain: Recombination protein RecR (199 aa).

The C4-type zinc finger occupies 57-72; that stretch reads CQSCRTFTEETYCPIC. A Toprim domain is found at 81 to 176; sequence SVICVVETPA…AVSRIAHGVP (96 aa).

This sequence belongs to the RecR family.

Functionally, may play a role in DNA repair. It seems to be involved in an RecBC-independent recombinational process of DNA repair. It may act with RecF and RecO. This Shewanella piezotolerans (strain WP3 / JCM 13877) protein is Recombination protein RecR.